Reading from the N-terminus, the 290-residue chain is Fructose-1,6-bisphosphatase class 1 (290 aa).

Mg(2+) is bound by residues glutamate 78, aspartate 96, leucine 98, and aspartate 99. Residues aspartate 99–serine 102, tyrosine 201, and lysine 226 each bind substrate. Glutamate 232 provides a ligand contact to Mg(2+).

This sequence belongs to the FBPase class 1 family. In terms of assembly, homotetramer. Mg(2+) serves as cofactor.

It localises to the cytoplasm. It carries out the reaction beta-D-fructose 1,6-bisphosphate + H2O = beta-D-fructose 6-phosphate + phosphate. The protein operates within carbohydrate biosynthesis; gluconeogenesis. The sequence is that of Fructose-1,6-bisphosphatase class 1 from Helicobacter pylori (strain G27).